The sequence spans 296 residues: MANVLCNRARLVTYLPGFYSLVKRVVNPKAFSTAGSSGSDEPHVAATPPDLCPRTVWPDEVMGPFGPQDQRFQLPGNIGFDCHLNGTAAQRKSQASKSLPDILAEPSPNERHEFVMAQYINEFQGSDVPQKQQVNNAETYFENAKVECAVQACPELLRKDFESMFPEVNANHLTVLTVTQKTKNDMTVWSQEVEDEREMLLENFINGAKEICYAICSEGYWADFIDPSSGLAFFGPYTNNTLFETDERYRHFGFSVDDLGCCKVIRHNIWGTHVVVGSIFTNAEPDSPIMRKLSGN.

The transit peptide at 1–92 directs the protein to the mitochondrion; that stretch reads MANVLCNRAR…HLNGTAAQRK (92 aa).

Heterodimer with MMACHC. Forms a multiprotein complex with MMACHC, MTR and MTRR.

It localises to the cytoplasm. It is found in the mitochondrion. Its function is as follows. Involved in cobalamin metabolism and trafficking. Plays a role in regulating the biosynthesis and the proportion of two coenzymes, methylcob(III)alamin (MeCbl) and 5'-deoxyadenosylcobalamin (AdoCbl). Promotes oxidation of cob(II)alamin bound to MMACHC. The processing of cobalamin in the cytosol occurs in a multiprotein complex composed of at least MMACHC, MMADHC, MTRR (methionine synthase reductase) and MTR (methionine synthase) which may contribute to shuttle safely and efficiently cobalamin towards MTR in order to produce methionine. This chain is Cobalamin trafficking protein CblD (MMADHC), found in Gallus gallus (Chicken).